The sequence spans 132 residues: MSAKASKAPASKAPAEKKPAAKKTSSSTDPSKKRTKARKETYSSYIYKVLKQTHPDTGISQKSMSILNSFVNDIFERIATESSKLAAYNKKSTISAREIQTAVRLILPGELAKHAVSEGTRAVTKYSSSTQA.

A compositionally biased stretch (low complexity) spans Met-1–Ala-13. Residues Met-1–Lys-39 are disordered. The residue at position 7 (Lys-7) is an N6-acetyllysine; alternate. Lys-7 participates in a covalent cross-link: Glycyl lysine isopeptide (Lys-Gly) (interchain with G-Cter in SUMO); alternate. Residue Ser-11 is modified to Phosphoserine. Position 12 is an N6-acetyllysine (Lys-12). Position 17 is an N6-acetyllysine; alternate (Lys-17). Residue Lys-17 forms a Glycyl lysine isopeptide (Lys-Gly) (interchain with G-Cter in SUMO); alternate linkage. Residue Lys-18 forms a Glycyl lysine isopeptide (Lys-Gly) (interchain with G-Cter in SUMO) linkage. Lys-125 is covalently cross-linked (Glycyl lysine isopeptide (Lys-Gly) (interchain with G-Cter in ubiquitin)).

This sequence belongs to the histone H2B family. In terms of assembly, the nucleosome is a histone octamer containing two molecules each of H2A, H2B, H3 and H4 assembled in one H3-H4 heterotetramer and two H2A-H2B heterodimers. The octamer wraps approximately 147 bp of DNA. Monoubiquitinated by the UBC2-BRE1 complex to form H2BK123ub1. H2BK123ub1 gives a specific tag for epigenetic transcriptional activation and is also prerequisite for H3K4me and H3K79me formation. H2BK123ub1 also modulates the formation of double-strand breaks during meiosis and is a prerequisite for DNA-damage checkpoint activation. Post-translationally, phosphorylated by STE20 to form H2BS10ph during progression through meiotic prophase. May be correlated with chromosome condensation. In terms of processing, acetylated by GCN5 to form H2BK11ac and H2BK16ac. H2BK16ac can also be formed by ESA1. Acetylation of N-terminal lysines and particularly formation of H2BK11acK16ac has a positive effect on transcription. Sumoylation to form H2BK6su and probably also H2BK16su or H2BK17su, occurs preferentially near the telomeres and represses gene transcription.

It localises to the nucleus. It is found in the chromosome. Core component of nucleosome. Nucleosomes wrap and compact DNA into chromatin, limiting DNA accessibility to the cellular machineries which require DNA as a template. Histones thereby play a central role in transcription regulation, DNA repair, DNA replication and chromosomal stability. DNA accessibility is regulated via a complex set of post-translational modifications of histones, also called histone code, and nucleosome remodeling. The chain is Histone H2B.1 (HTB1) from Kluyveromyces lactis (strain ATCC 8585 / CBS 2359 / DSM 70799 / NBRC 1267 / NRRL Y-1140 / WM37) (Yeast).